Consider the following 142-residue polypeptide: Large ribosomal subunit protein uL13 (142 aa).

This sequence belongs to the universal ribosomal protein uL13 family. As to quaternary structure, part of the 50S ribosomal subunit.

Functionally, this protein is one of the early assembly proteins of the 50S ribosomal subunit, although it is not seen to bind rRNA by itself. It is important during the early stages of 50S assembly. In Psychromonas ingrahamii (strain DSM 17664 / CCUG 51855 / 37), this protein is Large ribosomal subunit protein uL13.